The following is a 166-amino-acid chain: Mitochondrial translation release factor in rescue (166 aa).

A mitochondrion-targeting transit peptide spans 1 to 35 (MSTVGLFHFPTPLTRICPAPWGLRLWEKLTLLSPG). The segment at 57–121 (ENELEEQFVK…LQEKVDVFYN (65 aa)) is GGQ domain. Residues 71–73 (GGQ) carry the GGQ motif. Residue Gln-73 is modified to N5-methylglutamine. A disordered region spans residues 122–148 (GENSPVHKEKREAAKKKQERKKRAKET). A compositionally biased stretch (basic and acidic residues) spans 126-137 (PVHKEKREAAKK). Residues 127-160 (VHKEKREAAKKKQERKKRAKETLEKKKLLKELWE) adopt a coiled-coil conformation.

The protein belongs to the prokaryotic/mitochondrial release factor family. As to quaternary structure, interacts (via C-terminus) with MTRES1 (via S4 domain). Associates with mitoribosomal S39 large subunit, peptidyl tRNA and nascent chain. Post-translationally, methylation of glutamine in the GGQ triplet by HEMK1. In terms of tissue distribution, expressed in all areas of the brain tested.

It localises to the mitochondrion. In terms of biological role, part of a mitoribosome-associated quality control pathway that prevents aberrant translation by responding to interruptions during elongation. As heterodimer with MTRES1, ejects the unfinished nascent chain and peptidyl transfer RNA (tRNA), respectively, from stalled ribosomes. Recruitment of mitoribosome biogenesis factors to these quality control intermediates suggests additional roles for MTRES1 and MTRF during mitoribosome rescue. The protein is Mitochondrial translation release factor in rescue of Homo sapiens (Human).